Reading from the N-terminus, the 558-residue chain is uncharacterized protein (558 aa).

A coiled-coil region spans residues 47-78 (DFDDLNSIFKDFQKQKKNLKDNILKFYNKKKE). Disordered regions lie at residues 239 to 266 (NNNN…SKIE) and 424 to 447 (NNNN…NSGE). The segment covering 245 to 266 (TETESEIESKSESESESESKIE) has biased composition (basic and acidic residues). Residues 424–444 (NNNNNNNNNNNNNNNNNNNNN) are compositionally biased toward low complexity.

This is an uncharacterized protein from Dictyostelium discoideum (Social amoeba).